The primary structure comprises 231 residues: MSHEYDTVAPPNAKRMKTDNQLEDKKILYVVLEGCSLETAKVGGEYAILSSDKHANFLRKQKKDPADYRPDILHQCLLNLLDSPLNRAGKLRVFFRTSKNVLVDVSPQCRIPRTFDRFCGLMVQLLHKLSIRAAETTQKLMSVVKNPVSNHLPVGSRKMLMSFNVPELTMANKLVAPETDEPLVLIIGGIARGKIVVDYNDSETKISNYPLSAALTCAKVTSGLEEIWGII.

Residues M161, G188, G193, and 206 to 211 (ISNYPL) each bind S-adenosyl-L-methionine.

The protein belongs to the class IV-like SAM-binding methyltransferase superfamily. RNA methyltransferase NEP1 family. In terms of assembly, homodimer.

It localises to the nucleus. It is found in the nucleolus. It carries out the reaction a pseudouridine in rRNA + S-adenosyl-L-methionine = an N(1)-methylpseudouridine in rRNA + S-adenosyl-L-homocysteine + H(+). Functionally, S-adenosyl-L-methionine-dependent pseudouridine N(1)-methyltransferase that methylates a pseudouridine in 18S rRNA. Involved the biosynthesis of the hypermodified N1-methyl-N3-(3-amino-3-carboxypropyl) pseudouridine (m1acp3-Psi) conserved in eukaryotic 18S rRNA. Also has an essential role in 40S ribosomal subunit biogenesis independent on its methyltransferase activity, facilitating the incorporation of ribosomal protein S19 during the formation of pre-ribosomes. The sequence is that of Ribosomal RNA small subunit methyltransferase nep-1 from Caenorhabditis elegans.